A 156-amino-acid chain; its full sequence is SsrA-binding protein (156 aa).

It belongs to the SmpB family.

Its subcellular location is the cytoplasm. Functionally, required for rescue of stalled ribosomes mediated by trans-translation. Binds to transfer-messenger RNA (tmRNA), required for stable association of tmRNA with ribosomes. tmRNA and SmpB together mimic tRNA shape, replacing the anticodon stem-loop with SmpB. tmRNA is encoded by the ssrA gene; the 2 termini fold to resemble tRNA(Ala) and it encodes a 'tag peptide', a short internal open reading frame. During trans-translation Ala-aminoacylated tmRNA acts like a tRNA, entering the A-site of stalled ribosomes, displacing the stalled mRNA. The ribosome then switches to translate the ORF on the tmRNA; the nascent peptide is terminated with the 'tag peptide' encoded by the tmRNA and targeted for degradation. The ribosome is freed to recommence translation, which seems to be the essential function of trans-translation. The polypeptide is SsrA-binding protein (Bacillus velezensis (strain DSM 23117 / BGSC 10A6 / LMG 26770 / FZB42) (Bacillus amyloliquefaciens subsp. plantarum)).